A 122-amino-acid polypeptide reads, in one-letter code: Large ribosomal subunit protein uL14 (122 aa).

This sequence belongs to the universal ribosomal protein uL14 family. As to quaternary structure, part of the 50S ribosomal subunit. Forms a cluster with proteins L3 and L19. In the 70S ribosome, L14 and L19 interact and together make contacts with the 16S rRNA in bridges B5 and B8.

Its function is as follows. Binds to 23S rRNA. Forms part of two intersubunit bridges in the 70S ribosome. The sequence is that of Large ribosomal subunit protein uL14 from Thermotoga petrophila (strain ATCC BAA-488 / DSM 13995 / JCM 10881 / RKU-1).